Here is a 662-residue protein sequence, read N- to C-terminus: ATP-dependent RNA helicase DDX3X (662 aa).

The residue at position 2 (S2) is an N-acetylserine. A required for TBK1 and IKBKE-dependent IFNB1 activation region spans residues 2-139 (SHVAVENALG…KSDEDDWSKP (138 aa)). The short motif at 12 to 21 (LDQQFAGLDL) is the Nuclear export signal element. The disordered stretch occupies residues 19–144 (LDLNSSDNQS…DWSKPLPPSE (126 aa)). Residues 21–34 (LNSSDNQSGGSTAS) show a composition bias toward polar residues. The tract at residues 38–44 (YIPPHLR) is interaction with EIF4E. Positions 44–68 (RNREATKGFYDKDSSGWSSSKDKDA) are enriched in basic and acidic residues. N6-acetyllysine is present on K55. Positions 70-89 (SSFGSRSDSRGKSSFFSDRG) are enriched in low complexity. An interaction with VACV protein K7 region spans residues 81 to 90 (KSSFFSDRGS). Phosphoserine occurs at positions 82, 86, and 90. Residues 88–123 (RGSGSRGRFDDRGRSDYDGIGSRGDRSGFGKFERGG) form an involved in binding to RNA G-quadruplex region. The span at 94–130 (GRFDDRGRSDYDGIGSRGDRSGFGKFERGGNSRWCDK) shows a compositional bias: basic and acidic residues. The interval 100 to 110 (GRSDYDGIGSR) is interaction with IKBKE. The interval 100 to 662 (GRSDYDGIGS…NSQGVDWWGN (563 aa)) is interaction with GSK3B. R101 is subject to Omega-N-methylarginine. At S102 the chain carries Phosphoserine; by IKKE. Y104 bears the Phosphotyrosine mark. Omega-N-methylarginine is present on R110. Residue K118 is modified to N6-acetyllysine. S131 carries the phosphoserine modification. An interaction with CHUK region spans residues 139 to 172 (PLPPSERLEQELFSGGNTGINFEKYDDIPVEATG). A Q motif motif is present at residues 180-208 (ESFSDVEMGEIIMGNIELTRYTRPTPVQK). Residue S181 is modified to Phosphoserine; by TBK1; in vitro. At S183 the chain carries Phosphoserine; by TBK1. Position 200-207 (200-207 (YTRPTPVQ)) interacts with ATP. The Helicase ATP-binding domain maps to 211–403 (IPIIKEKRDL…RDFLDEYIFL (193 aa)). Residue K215 forms a Glycyl lysine isopeptide (Lys-Gly) (interchain with G-Cter in SUMO2) linkage. Position 224–231 (224–231 (AQTGSGKT)) interacts with ATP. S240 is subject to Phosphoserine; by TBK1; in vitro. Positions 250–259 (ALRAMKENGR) are involved in stimulation of ATPase activity by DNA and RNA, nucleic acid binding and unwinding and HIV-1 replication. S269 is modified (phosphoserine; by TBK1; in vitro). A DEAD box motif is present at residues 347-350 (DEAD). Residues 409-662 (GSTSENITQK…NSQGVDWWGN (254 aa)) are interaction with HCV core protein. The Helicase C-terminal domain maps to 414–575 (NITQKVVWVE…EVPSWLENMA (162 aa)). S429 is modified (phosphoserine; by CSNK1E and TBK1; in vitro). T438 is modified (phosphothreonine; by TBK1; in vitro). S442 and S456 each carry phosphoserine; by TBK1; in vitro. The residue at position 469 (T469) is a Phosphothreonine; by CSNK1E; in vitro. A Phosphoserine; by CSNK1E; in vitro modification is found at S470. S520 carries the phosphoserine; by TBK1; in vitro modification. Residues 536-661 (GNLGLATSFF…YNSQGVDWWG (126 aa)) are interaction with NXF1. At T542 the chain carries Phosphothreonine; by TBK1; in vitro. Residue S543 is modified to Phosphoserine; by CSNK1E and TBK1; in vitro. Residue R592 is modified to Omega-N-methylarginine. Phosphoserine is present on residues S594, S605, and S612. Residues 601 to 634 (DYRQSSGASSSSFSSSRASSSRSGGGGHGSSRGF) form a disordered region. The segment covering 604–622 (QSSGASSSSFSSSRASSSR) has biased composition (low complexity). Omega-N-methylarginine is present on residues R617 and R632. Residues 623–634 (SGGGGHGSSRGF) show a composition bias toward gly residues.

It belongs to the DEAD box helicase family. DDX3/DED1 subfamily. As to quaternary structure, homodimer; can bind RNA as a monomer and as a dimer/oligomer. Interacts with TDRD3. Interacts (when phosphorylated at Ser-102) with IRF3; the interaction facilitates the phosphorylation and activation of IRF3 by IKBKE. Directly interacts with XPO1/CRM1. The interaction with XPO1/CMR1 is dependent on the DDX3X nuclear export signal motif and XPO1 interaction with GTPase RAN in its active GTP-bound form. Weakly interacts with TBKBP1/SINTBAD. Directly interacts with TRAF3; this interaction stimulates TRAF3 'Lys-63' ubiquitination. Interacts with CSNK1E in a Wnt-dependent manner; this interaction greatly enhances CSNK1E affinity for ATP, stimulates its kinase activity and promotes CSNK1E-mediated DVL2 phosphorylation. In the presence of RNA, the interaction is decreased. Also interacts with CSNK1D and stimulates its kinase activity. Interacts with TRPV4; this interaction is decreased when the TRPV4 channel is activated, leading to DDX3X relocalization to the nucleus. Interacts with MAP3K14/NIK. Directly interacts with CHUK/IKKA after physiological activation of the TLR7 and TLR8 pathways; this interaction enhances CHUK autophosphorylation. May associate with EIF4F complex, composed of at least EIF4A, EIF4E and EIF4G1/EIF4G3. Directly interacts with EIF4E in an RNA-independent manner; this interaction enhances EIF4E cap-binding ability. Directly interacts with EIF4G1 in an RNA-independent manner. DDX3X competes with EIF4G1 for interaction with EIF4E. Interacts with EIF4A1 and EIF2S1 in an RNA-independent manner. Associates with the eukaryotic translation initiation factor 3 (eIF-3) complex, including with EIF3B and EIF3C subunits. Directly interacts with IKBKE/IKKE; this interaction stimulates IKBKE activating autophosphorylation and is induced upon viral infection. Interacts with TBK1. Interacts with SP1; this interaction potentiates SP1-induced CDKN1A/WAF1/CIP1 transcription. Interacts with GSK3A and GSK3B. Interacts with several death receptors, inclusing FAS, TNFRSF10A and TNFRSF10B. Recruited to TNFRSF10B in the absence of receptor stimulation. When TNFRSF10B is stimulated, further recruited to the receptor and cleaved by caspases. A large proteolytic fragment remains associated with TNFRSF10B. Interacts (via C-terminus) with NXF1/TAP; this interaction may be partly involved in DDX3X nuclear export and in NXF1 localization to stress granules. Identified in an mRNP complex, composed of at least DHX9, DDX3X, ELAVL1, HNRNPU, IGF2BP1/2, ILF3, PABPC1, PCBP2, PTBP2, STAU1, STAU2, SYNCRIP and YBX1. The interaction with IGF2BP1/2 is RNA-dependent. Directly interacts with PABPC1/PABP1 in an RNA-independent manner. This interaction increases in stressed cells and decreases during cell recovery. Interacts (via C-terminus) with MAVS/IPS-1; this interaction occurs rapidly, but transiently after Sendai virus infection. The interaction potentiates MAVS-mediated IFNB induction. Interacts with ERCC6/CBS. Interacts with DHX33 in an RNA-independent manner. Interacts with DDX5 in the cytoplasm; this interaction may be more efficient when both proteins are unphosphorylated. Interacts with RIGI/RIG-1. Interacts with IFIH1/MDA5. Interacts with NCAPH; this interaction may be important for the NCAPH localization at condensing chromosomes during mitosis. Interacts with NLRP3 (via NACHT domain) under inflammasome-activating conditions. Interacts with CAPRIN1. Interacts with HNF4A and NR0B2/SHP in an RNA-independent manner; this interaction disrupts the interaction between HNF4 and NR0B2 that forms inactive heterodimers and enhances the formation of active HNF4 homodimers. Interacts with CREBBP/CBP. Interacts with EP300/p300. Interacts with gamma-tubulin. Interacts with phosphorylated TP53. Directly interacts with RELA/p65; this interaction may trap RELA in the cytoplasm, impairing nuclear relocalization upon TNF activating signals. (Microbial infection) Interacts with hepatitis B virus (HBV) polymerase in the cytoplasm; this interaction may inhibit DDX3X interaction with the IKBKE/TBK1 complex, and hence impair IKBKE/TBK1-mediated increase in IFNB production. In terms of assembly, (Microbial infection) Directly interacts with hepatitis C virus (HCV) core protein in the cytoplasm. As to quaternary structure, (Microbial infection) Interacts with vaccinia virus (VACV) protein K7. (Microbial infection) Interacts with HIV-1 protein Rev. In terms of assembly, (Microbial infection) Interacts with Venezuelan equine encephalitis virus non-structural protein 3. Phosphorylated by TBK1; the phosphorylation is required for the synergistic induction of IFNB mediated by TBK1 and DDX3X. Phosphorylated by IKBKE at Ser-102 after ssRNA viral infection; enhances the induction of INFB promoter by IRF3. The cytoplasmic form is highly phosphorylated in the G1/S phase of the cell cycle and much less at G2/M. Phosphorylation by CSNK1E may inhibit RNA-stimulated ATPase activity. In terms of processing, upon stimulation of death receptors, including TNFRSF10B, recruited to receptors and cleaved by caspases. Proteolytic fragments remain associated with the receptors. This cleavage presumably inactivates DDX3X anti-apoptotic function. Post-translationally, ubiquitinated by RNF39 via 'Lys-48'-linked ubiquitination; leading to proteasomal degradation. Widely expressed. In testis, expressed in spermatids. Expressed in epidermis and liver (at protein level).

The protein localises to the cell membrane. It is found in the nucleus. It localises to the cytoplasm. Its subcellular location is the stress granule. The protein resides in the inflammasome. The protein localises to the cell projection. It is found in the lamellipodium. It localises to the cytoskeleton. Its subcellular location is the microtubule organizing center. The protein resides in the centrosome. The catalysed reaction is ATP + H2O = ADP + phosphate + H(+). Multifunctional ATP-dependent RNA helicase. The ATPase activity can be stimulated by various ribo-and deoxynucleic acids indicative for a relaxed substrate specificity. In vitro can unwind partially double-stranded DNA with a preference for 5'-single-stranded DNA overhangs. Binds RNA G-quadruplex (rG4s) structures, including those located in the 5'-UTR of NRAS mRNA. Involved in many cellular processes, which do not necessarily require its ATPase/helicase catalytic activities. Involved in transcription regulation. Positively regulates CDKN1A/WAF1/CIP1 transcription in an SP1-dependent manner, hence inhibits cell growth. This function requires its ATPase, but not helicase activity. CDKN1A up-regulation may be cell-type specific. Binds CDH1/E-cadherin promoter and represses its transcription. Potentiates HNF4A-mediated MTTP transcriptional activation; this function requires ATPase, but not helicase activity. Facilitates HNF4A acetylation, possibly catalyzed by CREBBP/EP300, thereby increasing the DNA-binding affinity of HNF4 to its response element. In addition, disrupts the interaction between HNF4 and SHP that forms inactive heterodimers and enhances the formation of active HNF4 homodimers. By promoting HNF4A-induced MTTP expression, may play a role in lipid homeostasis. May positively regulate TP53 transcription. Associates with mRNPs, predominantly with spliced mRNAs carrying an exon junction complex (EJC). Involved in the regulation of translation initiation. Not involved in the general process of translation, but promotes efficient translation of selected complex mRNAs, containing highly structured 5'-untranslated regions (UTR). This function depends on helicase activity. Might facilitate translation by resolving secondary structures of 5'-UTRs during ribosome scanning. Alternatively, may act prior to 43S ribosomal scanning and promote 43S pre-initiation complex entry to mRNAs exhibiting specific RNA motifs, by performing local remodeling of transcript structures located close to the cap moiety. Independently of its ATPase activity, promotes the assembly of functional 80S ribosomes and disassembles from ribosomes prior to the translation elongation process. Positively regulates the translation of cyclin E1/CCNE1 mRNA and consequently promotes G1/S-phase transition during the cell cycle. May activate TP53 translation. Required for endoplasmic reticulum stress-induced ATF4 mRNA translation. Independently of its ATPase/helicase activity, enhances IRES-mediated translation; this activity requires interaction with EIF4E. Independently of its ATPase/helicase activity, has also been shown specifically repress cap-dependent translation, possibly by acting on translation initiation factor EIF4E. Involved in innate immunity, acting as a viral RNA sensor. Binds viral RNAs and promotes the production of type I interferon (IFN-alpha and IFN-beta). Potentiate MAVS/RIGI-mediated induction of IFNB in early stages of infection. Enhances IFNB1 expression via IRF3/IRF7 pathway and participates in NFKB activation in the presence of MAVS and TBK1. Involved in TBK1 and IKBKE-dependent IRF3 activation leading to IFNB induction, acts as a scaffolding adapter that links IKBKE and IRF3 and coordinates their activation. Involved in the TLR7/TLR8 signaling pathway leading to type I interferon induction, including IFNA4 production. In this context, acts as an upstream regulator of IRF7 activation by MAP3K14/NIK and CHUK/IKKA. Stimulates CHUK autophosphorylation and activation following physiological activation of the TLR7 and TLR8 pathways, leading to MAP3K14/CHUK-mediated activatory phosphorylation of IRF7. Also stimulates MAP3K14/CHUK-dependent NF-kappa-B signaling. Negatively regulates TNF-induced IL6 and IL8 expression, via the NF-kappa-B pathway. May act by interacting with RELA/p65 and trapping it in the cytoplasm. May also bind IFNB promoter; the function is independent of IRF3. Involved in both stress and inflammatory responses. Independently of its ATPase/helicase activity, required for efficient stress granule assembly through its interaction with EIF4E, hence promotes survival in stressed cells. Independently of its helicase activity, regulates NLRP3 inflammasome assembly through interaction with NLRP3 and hence promotes cell death by pyroptosis during inflammation. This function is independent of helicase activity. Therefore DDX3X availability may be used to interpret stress signals and choose between pro-survival stress granules and pyroptotic NLRP3 inflammasomes and serve as a live-or-die checkpoint in stressed cells. In association with GSK3A/B, negatively regulates extrinsic apoptotic signaling pathway via death domain receptors, including TNFRSF10B, slowing down the rate of CASP3 activation following death receptor stimulation. Cleavage by caspases may inactivate DDX3X and relieve the inhibition. Independently of its ATPase/helicase activity, allosteric activator of CSNK1E. Stimulates CSNK1E-mediated phosphorylation of DVL2, thereby involved in the positive regulation of Wnt/beta-catenin signaling pathway. Also activates CSNK1A1 and CSNK1D in vitro, but it is uncertain if these targets are physiologically relevant. ATPase and casein kinase-activating functions are mutually exclusive. May be involved in mitotic chromosome segregation. Functionally, (Microbial infection) Facilitates hepatitis C virus (HCV) replication. During infection, HCV core protein inhibits the interaction between MAVS and DDX3X and therefore impairs MAVS-dependent INFB induction and might recruit DDX3X to HCV replication complex. In terms of biological role, (Microbial infection) Facilitates HIV-1 replication. Acts as a cofactor for XPO1-mediated nuclear export of HIV-1 Rev RNAs. This function is strongly stimulated in the presence of TBK1 and requires DDX3X ATPase activity. Its function is as follows. (Microbial infection) Facilitates Zika virus (ZIKV) replication. (Microbial infection) Facilitates Dengue virus (DENV) replication. Functionally, (Microbial infection) Facilitates Venezuelan equine encephalitis virus (VEEV) replication. This is ATP-dependent RNA helicase DDX3X (DDX3X) from Homo sapiens (Human).